A 372-amino-acid polypeptide reads, in one-letter code: Nucleosome assembly protein 1;1 (372 aa).

Residues 26–80 adopt a coiled-coil conformation; sequence VNALKNKLQNLAGQRSDVLENLTPNVRKRVDALRDIQSQHDELEAKFREERAILE. Residue Ser41 is modified to Phosphoserine. A Nuclear export signal motif is present at residues 47 to 62; that stretch reads LTPNVRKRVDALRDIQ. Positions 223–228 match the Nuclear localization signal motif; sequence KKKPKK. Positions 299-372 are disordered; it reads AMEAEDFEID…DERPPECKQQ (74 aa). A compositionally biased stretch (acidic residues) spans 300–337; the sequence is MEAEDFEIDDDEEDDIDEDEDEEDEEDEEDDDDEDEEE. Residues 360 to 372 are compositionally biased toward basic and acidic residues; the sequence is GKQDERPPECKQQ. Cys369 carries the post-translational modification Cysteine methyl ester. The S-farnesyl cysteine moiety is linked to residue Cys369. Positions 370–372 are cleaved as a propeptide — removed in mature form; sequence KQQ.

It belongs to the nucleosome assembly protein (NAP) family. As to quaternary structure, can form homomeric and heteromeric protein complexes with NAP1;2, NAP1;3 and NAP1;4. Binds histone H2A. Interacts with PP438/PNM1. Prenylation of the protein is required for its function during the cell proliferation phase of leaf development. Ubiquitous.

Its subcellular location is the nucleus. It localises to the cytoplasm. In terms of biological role, may modulate chromatin structure by regulation of nucleosome assembly/disassembly. Contributes to the regulation of cell proliferation and cell expansion. May function in nucleotide excision repair (NER). Involved in somatic homologous recombination. This is Nucleosome assembly protein 1;1 (NAP1;1) from Arabidopsis thaliana (Mouse-ear cress).